Reading from the N-terminus, the 688-residue chain is PTS system glucoside-specific EIICBA component (688 aa).

A PTS EIIC type-1 domain is found at Lys-3 to Asp-427. 10 helical membrane passes run Ile-12–Phe-32, Leu-81–Met-101, Leu-137–Leu-157, Phe-182–Trp-202, Leu-223–Ile-243, Ala-284–Ile-304, Val-315–Pro-335, Phe-340–Leu-360, Leu-364–Gly-384, and Leu-395–Ile-415. A PTS EIIB type-1 domain is found at Ala-438–Lys-519. Cys-460 (phosphocysteine intermediate; for EIIB activity) is an active-site residue. Residues Asp-560 to Asn-664 form the PTS EIIA type-1 domain. His-612 functions as the Tele-phosphohistidine intermediate; for EIIA activity in the catalytic mechanism.

The protein localises to the cell membrane. Its function is as follows. The phosphoenolpyruvate-dependent sugar phosphotransferase system (sugar PTS), a major carbohydrate active -transport system, catalyzes the phosphorylation of incoming sugar substrates concomitantly with their translocation across the cell membrane. This system is involved in alpha- and beta-glucoside transport. The chain is PTS system glucoside-specific EIICBA component (glcB) from Staphylococcus aureus (strain JH1).